A 553-amino-acid chain; its full sequence is Terpene synthase 16 (553 aa).

Mg(2+) contacts are provided by Asp303, Asp307, and Glu457. The DDXXD motif signature appears at 303–307 (DDTYD).

Belongs to the terpene synthase family. Tpsa subfamily. Requires Mg(2+) as cofactor. Mn(2+) serves as cofactor. Expressed in leaves, trichomes and flowers.

The protein operates within secondary metabolite biosynthesis; terpenoid biosynthesis. Functionally, sesquiterpene synthase involved in the biosynthesis of volatile compounds. No activity detected with geranyl diphosphate (GPP) and farnesyl diphosphate (FPP) as substrates. The sequence is that of Terpene synthase 16 from Solanum lycopersicum (Tomato).